A 328-amino-acid polypeptide reads, in one-letter code: DNA-directed RNA polymerase subunit alpha (328 aa).

Residues 1 to 232 (MSTQGFLKPR…DQISVFAALE (232 aa)) are alpha N-terminal domain (alpha-NTD). The interval 248–328 (IDPVLLRPVD…NWPPLGLERP (81 aa)) is alpha C-terminal domain (alpha-CTD).

The protein belongs to the RNA polymerase alpha chain family. As to quaternary structure, homodimer. The RNAP catalytic core consists of 2 alpha, 1 beta, 1 beta' and 1 omega subunit. When a sigma factor is associated with the core the holoenzyme is formed, which can initiate transcription.

The enzyme catalyses RNA(n) + a ribonucleoside 5'-triphosphate = RNA(n+1) + diphosphate. Functionally, DNA-dependent RNA polymerase catalyzes the transcription of DNA into RNA using the four ribonucleoside triphosphates as substrates. The chain is DNA-directed RNA polymerase subunit alpha from Bordetella bronchiseptica (strain ATCC BAA-588 / NCTC 13252 / RB50) (Alcaligenes bronchisepticus).